We begin with the raw amino-acid sequence, 118 residues long: NADH-ubiquinone oxidoreductase chain 3 (118 aa).

3 consecutive transmembrane segments (helical) span residues 9-29, 62-82, and 87-107; these read IYLVISLLVCLIPLGVPFLFA, LVSILFIIFDLEVTFFFPWAV, and IDLFGFWSMMVFLLILTIGFL.

This sequence belongs to the complex I subunit 3 family.

The protein resides in the mitochondrion membrane. It carries out the reaction a ubiquinone + NADH + 5 H(+)(in) = a ubiquinol + NAD(+) + 4 H(+)(out). In terms of biological role, core subunit of the mitochondrial membrane respiratory chain NADH dehydrogenase (Complex I) that is believed to belong to the minimal assembly required for catalysis. Complex I functions in the transfer of electrons from NADH to the respiratory chain. The immediate electron acceptor for the enzyme is believed to be ubiquinone. The sequence is that of NADH-ubiquinone oxidoreductase chain 3 (NAD3) from Pinus sylvestris (Scotch pine).